A 251-amino-acid polypeptide reads, in one-letter code: 3-deoxy-manno-octulosonate cytidylyltransferase (251 aa).

This sequence belongs to the KdsB family.

The protein localises to the cytoplasm. The enzyme catalyses 3-deoxy-alpha-D-manno-oct-2-ulosonate + CTP = CMP-3-deoxy-beta-D-manno-octulosonate + diphosphate. It functions in the pathway nucleotide-sugar biosynthesis; CMP-3-deoxy-D-manno-octulosonate biosynthesis; CMP-3-deoxy-D-manno-octulosonate from 3-deoxy-D-manno-octulosonate and CTP: step 1/1. The protein operates within bacterial outer membrane biogenesis; lipopolysaccharide biosynthesis. Activates KDO (a required 8-carbon sugar) for incorporation into bacterial lipopolysaccharide in Gram-negative bacteria. This chain is 3-deoxy-manno-octulosonate cytidylyltransferase, found in Vibrio parahaemolyticus serotype O3:K6 (strain RIMD 2210633).